Here is a 239-residue protein sequence, read N- to C-terminus: Ribonuclease PH (239 aa).

Residues R86 and 124–126 (GTR) each bind phosphate.

It belongs to the RNase PH family. Homohexameric ring arranged as a trimer of dimers.

It catalyses the reaction tRNA(n+1) + phosphate = tRNA(n) + a ribonucleoside 5'-diphosphate. Phosphorolytic 3'-5' exoribonuclease that plays an important role in tRNA 3'-end maturation. Removes nucleotide residues following the 3'-CCA terminus of tRNAs; can also add nucleotides to the ends of RNA molecules by using nucleoside diphosphates as substrates, but this may not be physiologically important. Probably plays a role in initiation of 16S rRNA degradation (leading to ribosome degradation) during starvation. The polypeptide is Ribonuclease PH (Rickettsia akari (strain Hartford)).